Here is a 120-residue protein sequence, read N- to C-terminus: Aspartate 1-decarboxylase (120 aa).

The active-site Schiff-base intermediate with substrate; via pyruvic acid is the S25. Residue S25 is modified to Pyruvic acid (Ser). Residue T57 coordinates substrate. Y58 acts as the Proton donor in catalysis. Residue 73–75 (GAA) coordinates substrate.

This sequence belongs to the PanD family. In terms of assembly, heterooctamer of four alpha and four beta subunits. The cofactor is pyruvate. Is synthesized initially as an inactive proenzyme, which is activated by self-cleavage at a specific serine bond to produce a beta-subunit with a hydroxyl group at its C-terminus and an alpha-subunit with a pyruvoyl group at its N-terminus.

It is found in the cytoplasm. It carries out the reaction L-aspartate + H(+) = beta-alanine + CO2. Its pathway is cofactor biosynthesis; (R)-pantothenate biosynthesis; beta-alanine from L-aspartate: step 1/1. In terms of biological role, catalyzes the pyruvoyl-dependent decarboxylation of aspartate to produce beta-alanine. The polypeptide is Aspartate 1-decarboxylase (Polynucleobacter asymbioticus (strain DSM 18221 / CIP 109841 / QLW-P1DMWA-1) (Polynucleobacter necessarius subsp. asymbioticus)).